Reading from the N-terminus, the 740-residue chain is DNA (cytosine-5)-methyltransferase 3C (740 aa).

Disordered stretches follow at residues 75-99 and 248-312; these read LTGD…PVMP and FKPT…DVTN. The ADD domain occupies 309–441; it reads DVTNNKGNLE…LQDFFTTDPD (133 aa). A GATA-type; atypical zinc finger spans residues 320 to 350; sequence HCLSCGRKDPVSFHPLFEGGLCQSCRDRFLE. The segment at 361 to 417 adopts a PHD-type; atypical zinc-finger fold; sequence QSYCTVCCEGRELLLCSNTSCCRCFCVECLEVLVGAGTAEDVKLQEPWSCYMCLPQR. The SAM-dependent MTase C5-type domain maps to 462-740; the sequence is IRVLSLFDGI…APLKDHFACE (279 aa). I471, T473, E492, D514, and I515 together coordinate S-adenosyl-L-methionine. The active site involves C538. The S-adenosyl-L-methionine site is built by R719 and W721.

Belongs to the class I-like SAM-binding methyltransferase superfamily. C5-methyltransferase family. Homodimer. Interacts with DNMT3L. Interacts with SPOCD1; recruiting Dnmt3C to transposons. Specifically expressed in testis.

The protein resides in the nucleus. The catalysed reaction is a 2'-deoxycytidine in DNA + S-adenosyl-L-methionine = a 5-methyl-2'-deoxycytidine in DNA + S-adenosyl-L-homocysteine + H(+). In terms of biological role, DNA methyltransferase that specifically methylates the promoters of evolutionarily young retrotransposons in the male germline. De novo methylation and subsequent repression of transposable elements prevents their mobilization, which is essential for germline integrity. Compared to Dnmt3a and Dnmt3b, shows lower DNA methyltransferase efficiency. This is DNA (cytosine-5)-methyltransferase 3C from Mus musculus (Mouse).